Reading from the N-terminus, the 205-residue chain is MVSSCCGSVCSDQGCGLETCCRPSCCQTTCCRTTCCRPSCCVSSCCRPQCCQSVCCQPTCCRPSCCPSCCQTTCCRTTCCRPSCCVSSCCRPQCCQSVCCQPTCCRPSCSISSCCRPSCCVSRCCRSQCCQSVCCQPTCCRPSCCISSCCRPSCCESSCCRPCCCRPCCCLRPVCGRVSCHTTCYRPTCVISTCPRPLCCASSCC.

Repeat copies occupy residues 20 to 24, 25 to 29, 30 to 34, 35 to 39, 40 to 44, 45 to 49, 50 to 54, 55 to 59, 60 to 64, 65 to 68, 69 to 73, 74 to 78, 79 to 83, 84 to 88, 89 to 93, 94 to 98, 99 to 103, 104 to 108, 114 to 118, 119 to 123, 124 to 128, 129 to 133, 134 to 138, 139 to 143, 144 to 148, 149 to 153, 154 to 158, 159 to 163, 164 to 168, and 169 to 173. Residues 20-173 are 30 X 5 AA repeats of C-C-[IRQVEL]-[SPTR]-[STVQRCP]; it reads CCRPSCCQTT…CCRPCCCLRP (154 aa).

It belongs to the KRTAP type 4 family. In terms of assembly, interacts with hair keratins. As to expression, expressed in the hair follicles.

Its function is as follows. In the hair cortex, hair keratin intermediate filaments are embedded in an interfilamentous matrix, consisting of hair keratin-associated proteins (KRTAP), which are essential for the formation of a rigid and resistant hair shaft through their extensive disulfide bond cross-linking with abundant cysteine residues of hair keratins. The matrix proteins include the high-sulfur and high-glycine-tyrosine keratins. This is Keratin-associated protein 4-6 (KRTAP4-6) from Homo sapiens (Human).